The primary structure comprises 204 residues: Urease accessory protein UreG (204 aa).

Residue 12–19 (GPVGSGKT) participates in GTP binding.

The protein belongs to the SIMIBI class G3E GTPase family. UreG subfamily. In terms of assembly, homodimer. UreD, UreF and UreG form a complex that acts as a GTP-hydrolysis-dependent molecular chaperone, activating the urease apoprotein by helping to assemble the nickel containing metallocenter of UreC. The UreE protein probably delivers the nickel.

It localises to the cytoplasm. In terms of biological role, facilitates the functional incorporation of the urease nickel metallocenter. This process requires GTP hydrolysis, probably effectuated by UreG. In Ectopseudomonas mendocina (strain ymp) (Pseudomonas mendocina), this protein is Urease accessory protein UreG.